The following is an 832-amino-acid chain: Adhesin AWP2 (832 aa).

A signal peptide spans 1 to 25 (MRKLPLFMAWKFWLICLYIIKVAST). N-linked (GlcNAc...) asparagine glycosylation is found at Asn187, Asn290, Asn372, Asn390, Asn435, Asn448, Asn472, Asn482, Asn507, Asn512, Asn515, Asn534, Asn562, Asn579, Asn695, and Asn721. Residues 722-747 (QTTSPSMHTTSLVGSENGVSAKTVND) are disordered.

The protein resides in the secreted. Its subcellular location is the cell wall. In terms of biological role, mediates cell-substrate adhesion and promotes biofilm formation. In Candida glabrata (strain ATCC 2001 / BCRC 20586 / JCM 3761 / NBRC 0622 / NRRL Y-65 / CBS 138) (Yeast), this protein is Adhesin AWP2.